The sequence spans 301 residues: Possible hemolysin C (301 aa).

CBS domains follow at residues 79 to 141 (MVPR…NFRL) and 144 to 201 (LIRK…IDDE).

This sequence belongs to the UPF0053 family. Hemolysin C subfamily.

This Rickettsia bellii (strain RML369-C) protein is Possible hemolysin C (tlyC).